Consider the following 162-residue polypeptide: Disulfide bond formation protein B (162 aa).

Over 1–8 (MTPLFRKA) the chain is Cytoplasmic. The helical transmembrane segment at 9 to 25 (VWLLFAVSVCAFAGSLA) threads the bilayer. The Periplasmic portion of the chain corresponds to 26-43 (AQYVLGMEPCVLCISQRL). Cys-35 and Cys-38 form a disulfide bridge. The helical transmembrane segment at 44–60 (CVLATALCAAIVLMCRP) threads the bilayer. The Cytoplasmic segment spans residues 61 to 67 (RRKAGGL). The helical transmembrane segment at 68 to 85 (FGAVFISIPAVTGISVAA) threads the bilayer. Residues 86–141 (YQLWLQSLPPGTAPSCGAPWTFRLKGWPLFDWFEPVVRGFGNCAEPDYLLGVALPV) are Periplasmic-facing. An intrachain disulfide couples Cys-101 to Cys-128. A helical membrane pass occupies residues 142–160 (WSVAYFLAVALTVWWAWAR). The Cytoplasmic portion of the chain corresponds to 161 to 162 (AK).

Belongs to the DsbB family.

It localises to the cell inner membrane. Its function is as follows. Required for disulfide bond formation in some periplasmic proteins. Acts by oxidizing the DsbA protein. In Neisseria meningitidis serogroup A / serotype 4A (strain DSM 15465 / Z2491), this protein is Disulfide bond formation protein B.